The sequence spans 188 residues: Adenylate kinase (188 aa).

Gly12–Thr17 provides a ligand contact to ATP. Residues Ser33–Val62 are NMP. Residues Thr34, Arg39, Asn60–Val62, Gly87–Arg90, and Gln94 each bind AMP. The segment at Gly129–Asp135 is LID. Residue Arg130 coordinates ATP. Arg132 and Arg144 together coordinate AMP. Arg172 contacts ATP.

Belongs to the adenylate kinase family. As to quaternary structure, monomer.

It is found in the cytoplasm. It catalyses the reaction AMP + ATP = 2 ADP. It participates in purine metabolism; AMP biosynthesis via salvage pathway; AMP from ADP: step 1/1. In terms of biological role, catalyzes the reversible transfer of the terminal phosphate group between ATP and AMP. Plays an important role in cellular energy homeostasis and in adenine nucleotide metabolism. The protein is Adenylate kinase of Campylobacter curvus (strain 525.92).